The chain runs to 137 residues: Large ribosomal subunit protein uL16 (137 aa).

Belongs to the universal ribosomal protein uL16 family. As to quaternary structure, part of the 50S ribosomal subunit.

Binds 23S rRNA and is also seen to make contacts with the A and possibly P site tRNAs. This chain is Large ribosomal subunit protein uL16, found in Methylococcus capsulatus (strain ATCC 33009 / NCIMB 11132 / Bath).